A 273-amino-acid polypeptide reads, in one-letter code: Bis(5'-nucleosyl)-tetraphosphatase, symmetrical (273 aa).

The protein belongs to the Ap4A hydrolase family.

The enzyme catalyses P(1),P(4)-bis(5'-adenosyl) tetraphosphate + H2O = 2 ADP + 2 H(+). In terms of biological role, hydrolyzes diadenosine 5',5'''-P1,P4-tetraphosphate to yield ADP. The protein is Bis(5'-nucleosyl)-tetraphosphatase, symmetrical of Aromatoleum aromaticum (strain DSM 19018 / LMG 30748 / EbN1) (Azoarcus sp. (strain EbN1)).